Here is a 564-residue protein sequence, read N- to C-terminus: Rho guanine nucleotide exchange factor 9 (564 aa).

An SH3 domain is found at 8 to 67; it reads DSIVSAEAVWDHATMANRELAFKAGDVIKVLDASNKDWWWGQIDDEEGWFPASFVRLWVN. Residues 100 to 110 form an interaction with GPHN region; it reads RDQMRANVINE. Residues 103–287 enclose the DH domain; sequence MRANVINEIM…RNVTQQINER (185 aa). In terms of domain architecture, PH spans 318-425; sequence ELIYTGEMAW…WLRAFREERK (108 aa). The disordered stretch occupies residues 451-470; the sequence is KVPKQKGVNSARSVPPSYPP. Position 502 is a phosphoserine (Ser502).

In terms of assembly, interacts with GPHN.

The protein localises to the cytoplasm. The protein resides in the postsynaptic density. In terms of biological role, acts as a guanine nucleotide exchange factor (GEF) for CDC42. Promotes formation of GPHN clusters. This chain is Rho guanine nucleotide exchange factor 9 (ARHGEF9), found in Pongo abelii (Sumatran orangutan).